An 887-amino-acid chain; its full sequence is Lateral signaling target protein 2 homolog (887 aa).

Lys87 participates in a covalent cross-link: Glycyl lysine isopeptide (Lys-Gly) (interchain with G-Cter in ubiquitin). Residues 308–327 (PALSAPLPPEGPLSAKAKDP) form a disordered region. Ser334 is subject to Phosphoserine. Disordered regions lie at residues 354-396 (DEMS…GSDE) and 412-474 (ALAR…ASLA). A Phosphothreonine modification is found at Thr516. Ser586 carries the post-translational modification Phosphoserine; by MAP2K. Positions 599 to 714 (LAKASDRAPE…THAAPQATRE (116 aa)) are disordered. The span at 602–612 (ASDRAPERQEE) shows a compositional bias: basic and acidic residues. Over residues 638–648 (TSGSQVDTASG) the composition is skewed to polar residues. 2 stretches are compositionally biased toward low complexity: residues 681-693 (SGSS…SCSS) and 700-711 (AAPAATHAAPQA). The FYVE-type zinc finger occupies 817–879 (DEACGFCTAC…THCYMFHVTP (63 aa)). The Zn(2+) site is built by Cys823, Cys826, Cys839, Cys842, Cys847, Cys850, and Cys869. Residue Thr870 is modified to Phosphothreonine; by MAP2K. A Zn(2+)-binding site is contributed by Cys872.

This sequence belongs to the lst-2 family. In terms of assembly, interacts with TRIM3. Monoubiquitination at Lys-87 prevents binding to phosphatidylinositol 3-phosphate (PI3P) and localization to early endosome membranes.

It localises to the cytoplasm. The protein resides in the cytosol. Its subcellular location is the early endosome membrane. Functionally, negative regulator of epidermal growth factor receptor (EGFR) signaling. Acts by promoting EGFR degradation in endosomes when not monoubiquitinated. This is Lateral signaling target protein 2 homolog (ZFYVE28) from Homo sapiens (Human).